We begin with the raw amino-acid sequence, 500 residues long: Inner membrane transporter YjeM (500 aa).

The Cytoplasmic segment spans residues M1–L10. The helical transmembrane segment at I11 to F31 threads the bilayer. Residues Y32–S37 are Periplasmic-facing. Residues A38–A58 traverse the membrane as a helical segment. Topologically, residues E59–Y83 are cytoplasmic. The helical transmembrane segment at A84–A104 threads the bilayer. Topologically, residues K105–R124 are periplasmic. The chain crosses the membrane as a helical span at residues I125–V145. The Cytoplasmic segment spans residues T146–G163. A helical membrane pass occupies residues G164–L184. Topologically, residues N185–M209 are periplasmic. The chain crosses the membrane as a helical span at residues L210–V230. Residues D231–G243 lie on the Cytoplasmic side of the membrane. A helical membrane pass occupies residues I244–V264. Topologically, residues S265–V308 are periplasmic. A helical membrane pass occupies residues G309–F329. The Cytoplasmic segment spans residues T330 to P361. The helical transmembrane segment at A362–G382 threads the bilayer. The Periplasmic portion of the chain corresponds to G383–T394. A helical transmembrane segment spans residues L395–F415. At K416–S433 the chain is on the cytoplasmic side. A helical transmembrane segment spans residues T434–I454. Topologically, residues Q455–D462 are periplasmic. A helical membrane pass occupies residues W463–I483. Residues Y484–E500 lie on the Cytoplasmic side of the membrane.

It belongs to the amino acid-polyamine-organocation (APC) superfamily.

Its subcellular location is the cell inner membrane. This is Inner membrane transporter YjeM (yjeM) from Salmonella typhi.